A 296-amino-acid chain; its full sequence is Sulfate adenylyltransferase subunit 2 (296 aa).

It belongs to the PAPS reductase family. CysD subfamily. Heterodimer composed of CysD, the smaller subunit, and CysN.

It catalyses the reaction sulfate + ATP + H(+) = adenosine 5'-phosphosulfate + diphosphate. It functions in the pathway sulfur metabolism; hydrogen sulfide biosynthesis; sulfite from sulfate: step 1/3. In terms of biological role, with CysN forms the ATP sulfurylase (ATPS) that catalyzes the adenylation of sulfate producing adenosine 5'-phosphosulfate (APS) and diphosphate, the first enzymatic step in sulfur assimilation pathway. APS synthesis involves the formation of a high-energy phosphoric-sulfuric acid anhydride bond driven by GTP hydrolysis by CysN coupled to ATP hydrolysis by CysD. The chain is Sulfate adenylyltransferase subunit 2 from Rhodospirillum rubrum (strain ATCC 11170 / ATH 1.1.1 / DSM 467 / LMG 4362 / NCIMB 8255 / S1).